Here is a 166-residue protein sequence, read N- to C-terminus: Large ribosomal subunit protein uL10 (166 aa).

This sequence belongs to the universal ribosomal protein uL10 family. As to quaternary structure, part of the ribosomal stalk of the 50S ribosomal subunit. The N-terminus interacts with L11 and the large rRNA to form the base of the stalk. The C-terminus forms an elongated spine to which L12 dimers bind in a sequential fashion forming a multimeric L10(L12)X complex.

Its function is as follows. Forms part of the ribosomal stalk, playing a central role in the interaction of the ribosome with GTP-bound translation factors. The polypeptide is Large ribosomal subunit protein uL10 (Ureaplasma urealyticum serovar 10 (strain ATCC 33699 / Western)).